The primary structure comprises 1207 residues: Putative coatomer subunit alpha (1207 aa).

WD repeat units lie at residues Ser-9–Asp-50, Gly-51–Ser-90, Gly-93–Thr-134, Gly-135–Ala-174, Gly-210–Val-249, Gly-254–Thr-293, Arg-296–Asn-336, and Ser-370–Pro-411. 2 positions are modified to phosphoserine: Ser-409 and Ser-942.

In terms of assembly, oligomeric complex that consists of at least the alpha, beta, beta', gamma, delta, epsilon and zeta subunits.

It localises to the cytoplasm. Its subcellular location is the golgi apparatus membrane. In terms of biological role, the coatomer is a cytosolic protein complex that binds to dilysine motifs and reversibly associates with Golgi non-clathrin-coated vesicles, which further mediate biosynthetic protein transport from the ER, via the Golgi up to the trans Golgi network. Coatomer complex is required for budding from Golgi membranes, and is essential for the retrograde Golgi-to-ER transport of dilysine-tagged proteins. In Schizosaccharomyces pombe (strain 972 / ATCC 24843) (Fission yeast), this protein is Putative coatomer subunit alpha.